Here is a 272-residue protein sequence, read N- to C-terminus: AA9 family lytic polysaccharide monooxygenase G (272 aa).

Residues 1–22 form the signal peptide; that stretch reads MKGAGSASFLLTLLSTITRTSA. Residue histidine 23 participates in Cu(2+) binding. Residue asparagine 60 is glycosylated (N-linked (GlcNAc...) asparagine). 2 cysteine pairs are disulfide-bonded: cysteine 78–cysteine 202 and cysteine 121–cysteine 125. Histidine 110 serves as a coordination point for Cu(2+). O2-binding residues include histidine 188 and glutamine 197. Tyrosine 199 provides a ligand contact to Cu(2+).

It belongs to the polysaccharide monooxygenase AA9 family. Cu(2+) is required as a cofactor.

It localises to the secreted. The catalysed reaction is [(1-&gt;4)-beta-D-glucosyl]n+m + reduced acceptor + O2 = 4-dehydro-beta-D-glucosyl-[(1-&gt;4)-beta-D-glucosyl]n-1 + [(1-&gt;4)-beta-D-glucosyl]m + acceptor + H2O.. Lytic polysaccharide monooxygenase (LPMO) that depolymerizes crystalline and amorphous polysaccharides via the oxidation of scissile alpha- or beta-(1-4)-glycosidic bonds, yielding C1 or C4 oxidation products. Catalysis by LPMOs requires the reduction of the active-site copper from Cu(II) to Cu(I) by a reducing agent and H(2)O(2) or O(2) as a cosubstrate. Acts preferentially on crystalline regions of cellulose such as highly crystalline algae cellulose. This is AA9 family lytic polysaccharide monooxygenase G from Emericella nidulans (strain FGSC A4 / ATCC 38163 / CBS 112.46 / NRRL 194 / M139) (Aspergillus nidulans).